We begin with the raw amino-acid sequence, 466 residues long: MKMPQTIGLVHFIGIGGIGMSGIAEVLHNLGYKVQGSDQADSANVQRLRDKGIECFVGHKAENLGDAEVVVVSTAIKKTNPELKAAREKLLPIVRRAEMLAELMRFRQAVAIGGTHGKTTTTSMVATLLEAGGLDPTVINGGIINAYGTNARMGDGEWMVVEADESDGTFLKLPADIAVVTNIDPEHLDHYGSFDKVREAFRQFVENVPFYGFGVMCTDHPEVQALVGRIEDRRVITYGENAQADVRFTNHRMAGATSEFDVVIRDRKTGSQSTISGLRLPMPGRHNVSNATAAIAVAHELGLSGEAIKKGLSSFAGVKRRFTHTGSWNGVDVFDDYGHHPVEISAVLKAARSATKGRVIAIAQPHRFTRLHDLFNEFSACFNDADTVIVAPVYAAGEDPIDGVSSDELVSRIRAGGHRDARYIEGPTAIAPIIRGLAKPGDFVVFLGAGNITQWAYALPKELAAS.

114 to 120 is an ATP binding site; it reads GTHGKTT.

This sequence belongs to the MurCDEF family.

The protein localises to the cytoplasm. The enzyme catalyses UDP-N-acetyl-alpha-D-muramate + L-alanine + ATP = UDP-N-acetyl-alpha-D-muramoyl-L-alanine + ADP + phosphate + H(+). It functions in the pathway cell wall biogenesis; peptidoglycan biosynthesis. In terms of biological role, cell wall formation. This Mesorhizobium japonicum (strain LMG 29417 / CECT 9101 / MAFF 303099) (Mesorhizobium loti (strain MAFF 303099)) protein is UDP-N-acetylmuramate--L-alanine ligase.